The sequence spans 190 residues: Jupiter microtubule associated homolog 2 (190 aa).

M1 is modified (N-acetylmethionine). The span at 1 to 15 (MFQGADSQAGKSGSR) shows a compositional bias: polar residues. A disordered region spans residues 1-190 (MFQGADSQAG…PGGKSSLSFY (190 aa)). An N6-acetyllysine modification is found at K11. Residue S30 is modified to Phosphoserine. Over residues 35-44 (ISSSKPNRMA) the composition is skewed to polar residues. S45, S69, and S97 each carry phosphoserine. 2 stretches are compositionally biased toward basic and acidic residues: residues 110–129 (KPKDHVLLCEGEDSKSDLKA) and 138–153 (EQSDKGSSKEVEHAKI). S144 bears the Phosphoserine mark.

The protein belongs to the JUPITER family. As to quaternary structure, monomer. Dimer. Interacts with TPCN1.

The protein resides in the cytoplasm. The protein localises to the nucleus. In terms of biological role, nicotinic acid adenine dinucleotide phosphate (NAADP) binding protein required for NAADP-evoked intracellular calcium release. Confers NAADP-sensitivity to the two pore channels (TPCs) complex. Enables NAADP to activate Ca(2+) release from the endoplasmic reticulum through ryanodine receptors. This is Jupiter microtubule associated homolog 2 from Mus musculus (Mouse).